Consider the following 587-residue polypeptide: Ankyrin repeat and SOCS box protein 14 (587 aa).

ANK repeat units follow at residues 81-110 (NGWL…PSTW), 116-145 (NGET…NPNA), 149-178 (EGNS…DVNL), 182-211 (NERT…YPDA), 215-244 (YGFT…DVHS), 248-277 (DSSS…DANI), 281-310 (SGHL…IAAI), 313-342 (SGIS…DVNF), 355-384 (QRKS…LPNQ), 385-414 (DPVN…NVNY), and 416-449 (CRVN…DTER). Residues 521–576 (WPEIHFILANPRSLQHLCRLKIRKCMGRLRLRCPVFMSFLPLPNLLKAYVLYKEYD) form the SOCS box domain.

Belongs to the ankyrin SOCS box (ASB) family. As to quaternary structure, interacts with MAPRE2; this interaction promotes MAPRE2 degradation.

The protein operates within protein modification; protein ubiquitination. In terms of biological role, may be a substrate-recognition component of a SCF-like ECS (Elongin-Cullin-SOCS-box protein) E3 ubiquitin-protein ligase complex which mediates the ubiquitination and subsequent proteasomal degradation of target proteins. Plays a role in the inhibition of cardiomyocyte nuclear proliferation by mediating the ubiquitination and degradation of MAPRE2. The protein is Ankyrin repeat and SOCS box protein 14 (Asb14) of Mus musculus (Mouse).